The following is a 182-amino-acid chain: Molybdopterin synthase catalytic subunit (182 aa).

Substrate contacts are provided by residues 119–120, Lys-135, and 142–144; these read HR and KRE. Positions 152 to 182 are disordered; it reads VWRANRDGAPGQRIDTAEPAVGAGSGGEIDD.

Belongs to the MoaE family. MOCS2B subfamily. In terms of assembly, heterotetramer; composed of 2 small (MOCS2A) and 2 large (MOCS2B) subunits.

The protein resides in the cytoplasm. The catalysed reaction is 2 [molybdopterin-synthase sulfur-carrier protein]-C-terminal-Gly-aminoethanethioate + cyclic pyranopterin phosphate + H2O = molybdopterin + 2 [molybdopterin-synthase sulfur-carrier protein]-C-terminal Gly-Gly + 2 H(+). Its pathway is cofactor biosynthesis; molybdopterin biosynthesis. Its function is as follows. Catalytic subunit of the molybdopterin synthase complex, a complex that catalyzes the conversion of precursor Z into molybdopterin. Acts by mediating the incorporation of 2 sulfur atoms from thiocarboxylated MOCS2A into precursor Z to generate a dithiolene group. This is Molybdopterin synthase catalytic subunit from Pyricularia oryzae (strain 70-15 / ATCC MYA-4617 / FGSC 8958) (Rice blast fungus).